The following is a 371-amino-acid chain: Geranylgeranyl transferase type-2 subunit alpha (371 aa).

5 PFTA repeats span residues 45-79 (YSDE…NNYS), 92-126 (ILNQ…ELVK), 131-165 (NWKY…NMEL), 177-211 (INLD…KIYN), and 242-276 (LLKN…DDLF).

The protein belongs to the protein prenyltransferase subunit alpha family. Heterodimer of an alpha and a beta subunit.

It carries out the reaction geranylgeranyl diphosphate + L-cysteinyl-[protein] = S-geranylgeranyl-L-cysteinyl-[protein] + diphosphate. Its function is as follows. Catalyzes the transfer of a geranyl-geranyl moiety from geranyl-geranyl pyrophosphate to proteins having the C-terminal -XCC or -XCXC, where both cysteines may become modified. Acts on YPT1 and SEC4. The polypeptide is Geranylgeranyl transferase type-2 subunit alpha (BET4) (Candida albicans (Yeast)).